A 332-amino-acid polypeptide reads, in one-letter code: L-lactate dehydrogenase A chain (332 aa).

Residues 29-57 (GAVGMACAISILMKDLADELTLVDVVEDK) and Arg99 contribute to the NAD(+) site. Substrate-binding residues include Arg106, Asn138, and Arg169. Asn138 lines the NAD(+) pocket. The Proton acceptor role is filled by His193. Residue Thr248 participates in substrate binding.

Belongs to the LDH/MDH superfamily. LDH family. As to quaternary structure, homotetramer.

It localises to the cytoplasm. It carries out the reaction (S)-lactate + NAD(+) = pyruvate + NADH + H(+). The protein operates within fermentation; pyruvate fermentation to lactate; (S)-lactate from pyruvate: step 1/1. In terms of biological role, interconverts simultaneously and stereospecifically pyruvate and lactate with concomitant interconversion of NADH and NAD(+). In Gallus gallus (Chicken), this protein is L-lactate dehydrogenase A chain (LDHA).